Here is a 397-residue protein sequence, read N- to C-terminus: Putative 3'(2'),5'-bisphosphate nucleotidase, mitochondrial (397 aa).

A mitochondrion-targeting transit peptide spans 1–16; sequence MYILDTGARFSAVRFS. Catalysis depends on aspartate 91, which acts as the Proton acceptor. The Mg(2+) site is built by glutamate 114, aspartate 174, isoleucine 176, and aspartate 177. The active-site Proton acceptor is the threonine 179. Positions 179, 305, 308, and 334 each coordinate adenosine 3',5'-bisphosphate. Residues serine 305, lysine 308, and aspartate 334 each contribute to the AMP site. Mg(2+) is bound at residue aspartate 334.

It belongs to the inositol monophosphatase superfamily. The cofactor is Mg(2+).

It localises to the mitochondrion. It carries out the reaction 3'-phosphoadenylyl sulfate + H2O = adenosine 5'-phosphosulfate + phosphate. The catalysed reaction is adenosine 3',5'-bisphosphate + H2O = AMP + phosphate. The enzyme catalyses adenosine 2',5'-bisphosphate + H2O = AMP + phosphate. Its function is as follows. Phosphatase that converts adenosine 3'-phosphate 5'-phosphosulfate (PAPS) to adenosine 5'-phosphosulfate (APS) and 3'(2')-phosphoadenosine 5'-phosphate (PAP) to AMP. This is Putative 3'(2'),5'-bisphosphate nucleotidase, mitochondrial from Arabidopsis thaliana (Mouse-ear cress).